The primary structure comprises 728 residues: Diacylglycerol kinase 1 (728 aa).

The helical transmembrane segment at 27–48 threads the bilayer; that stretch reads GLMFSCFVAALVGILTIAYTAF. 2 Phorbol-ester/DAG-type zinc fingers span residues 79–137 and 149–212; these read PHSW…PKDC and VHQW…GDIC. 2 disordered regions span residues 265–296 and 308–336; these read KQTN…PTVN and VMNG…TGSF. Residues 267–294 show a composition bias toward polar residues; it reads TNETSADTGNSGSNCDESTESTADTGPT. Positions 310–319 are enriched in low complexity; it reads NGDSSNGDSD. One can recognise a DAGKc domain in the interval 357–496; it reads SDARPLLVFI…LDRWKVSILN (140 aa). Residues lysine 491 and lysine 500 each participate in a glycyl lysine isopeptide (Lys-Gly) (interchain with G-Cter in ubiquitin) cross-link.

This sequence belongs to the eukaryotic diacylglycerol kinase family. Monomer. In terms of tissue distribution, expressed in roots, shoots, and leaves.

The protein localises to the membrane. It catalyses the reaction a 1,2-diacyl-sn-glycerol + ATP = a 1,2-diacyl-sn-glycero-3-phosphate + ADP + H(+). Phosphorylates the second messenger diacylglycerol (DAG) to generate phosphatidic acid (PA), another important signaling molecule. PA is required for plant development and responses to abiotic stress and pathogen attack. May be involved in the accumulation of PA during cold stress. This chain is Diacylglycerol kinase 1 (DGK1), found in Arabidopsis thaliana (Mouse-ear cress).